The primary structure comprises 628 residues: Chaperone protein DnaK (628 aa).

Thr-197 carries the post-translational modification Phosphothreonine; by autocatalysis. Positions 597–628 (EQMYKGEQGAQGGAADTSKKKSDDDVIDAEIE) are disordered.

The protein belongs to the heat shock protein 70 family.

Its function is as follows. Acts as a chaperone. The polypeptide is Chaperone protein DnaK (Sulfurimonas denitrificans (strain ATCC 33889 / DSM 1251) (Thiomicrospira denitrificans (strain ATCC 33889 / DSM 1251))).